Consider the following 878-residue polypeptide: Phosphoenolpyruvate carboxylase (878 aa).

Active-site residues include His-140 and Lys-545.

The protein belongs to the PEPCase type 1 family. Mg(2+) serves as cofactor.

The enzyme catalyses oxaloacetate + phosphate = phosphoenolpyruvate + hydrogencarbonate. In terms of biological role, forms oxaloacetate, a four-carbon dicarboxylic acid source for the tricarboxylic acid cycle. This Pseudomonas syringae pv. syringae (strain B728a) protein is Phosphoenolpyruvate carboxylase.